Reading from the N-terminus, the 161-residue chain is MSVTLHTSLGDIKVEIFCDSVPLASENFLALCASNYYNNTIFHRNIKGFMIQGGDPTNTGRGGESIWKKQFKDEFPSHLKHNTRGILSMANSGPDTNGSQFFITYGKHRSLNKVYTVFGKIIAGIEVLDLMEKVPVDDKDLPLNEIILKSVTIHANPIANQ.

A PPIase cyclophilin-type domain is found at 1–153 (MSVTLHTSLG…NEIILKSVTI (153 aa)).

It belongs to the cyclophilin-type PPIase family. PPIL3 subfamily.

It catalyses the reaction [protein]-peptidylproline (omega=180) = [protein]-peptidylproline (omega=0). Its function is as follows. PPIases accelerate the folding of proteins. It catalyzes the cis-trans isomerization of proline imidic peptide bonds in oligopeptides. In Dictyostelium discoideum (Social amoeba), this protein is Peptidyl-prolyl cis-trans isomerase-like 3 (ppil3).